Here is a 219-residue protein sequence, read N- to C-terminus: Probable GTP-binding protein EngB (219 aa).

The EngB-type G domain maps to 24–207 (VQPEIAFAGR…HELIESWLRP (184 aa)). GTP is bound by residues 32 to 39 (GRSNAGKS), 59 to 63 (GRTQH), 81 to 84 (DLPG), 148 to 151 (TKCD), and 186 to 188 (FSA). Mg(2+) is bound by residues Ser39 and Thr61.

This sequence belongs to the TRAFAC class TrmE-Era-EngA-EngB-Septin-like GTPase superfamily. EngB GTPase family. Mg(2+) serves as cofactor.

Its function is as follows. Necessary for normal cell division and for the maintenance of normal septation. In Burkholderia cenocepacia (strain HI2424), this protein is Probable GTP-binding protein EngB.